The sequence spans 274 residues: NADPH-dependent 7-cyano-7-deazaguanine reductase (274 aa).

Val-80–Ser-82 provides a ligand contact to substrate. Ser-82–Lys-83 serves as a coordination point for NADPH. Cys-181 serves as the catalytic Thioimide intermediate. Asp-188 acts as the Proton donor in catalysis. His-220 to Glu-221 is a substrate binding site. Arg-249 to Gly-250 is a binding site for NADPH.

This sequence belongs to the GTP cyclohydrolase I family. QueF type 2 subfamily. In terms of assembly, homodimer.

It is found in the cytoplasm. It catalyses the reaction 7-aminomethyl-7-carbaguanine + 2 NADP(+) = 7-cyano-7-deazaguanine + 2 NADPH + 3 H(+). The protein operates within tRNA modification; tRNA-queuosine biosynthesis. Its function is as follows. Catalyzes the NADPH-dependent reduction of 7-cyano-7-deazaguanine (preQ0) to 7-aminomethyl-7-deazaguanine (preQ1). This chain is NADPH-dependent 7-cyano-7-deazaguanine reductase, found in Burkholderia pseudomallei (strain 1106a).